We begin with the raw amino-acid sequence, 491 residues long: MNTQQLAKLRSIVPEMRRVRHIHFVGIGGAGMGGIAEVLANEGYQISGSDLAPNPVTQQLMNLGATIYFNHRPENVRDASVVVVSSAISADNPEIVAAHEARIPVIRRAEMLAELMRFRHGIAIAGTHGKTTTTAMVSSIYAEAGLDPTFVNGGLVKAAGVHARLGHGRYLIAEADESDASFLHLQPMVAIVTNIEADHMDTYQGDFENLKQTFINFLHNLPFYGRAVMCVDDPVIRELLPRVGRQTTTYGFNEDADVRVEDYQQIGPQGHFTLLRQDKEPMRVTLNAPGRHNALNAAAAVAVATEEGIDDEAILRALESFQGTGRRFDFLGEFPLEPVNGKSGTAMLVDDYGHHPTEVDATIKAARAGWPDKNLVMLFQPHRFTRTRDLYDDFANVLTQVDTLLMLEVYPAGEAPIPGADSRSLCRTIRGRGKIDPILVPDPAQVAEMLAPVLTGNDLILVQGAGNIGKIARSLAEIKLKPQTPEEEQHD.

126–132 (GTHGKTT) serves as a coordination point for ATP.

This sequence belongs to the MurCDEF family.

The protein localises to the cytoplasm. It catalyses the reaction UDP-N-acetyl-alpha-D-muramate + L-alanine + ATP = UDP-N-acetyl-alpha-D-muramoyl-L-alanine + ADP + phosphate + H(+). It functions in the pathway cell wall biogenesis; peptidoglycan biosynthesis. In terms of biological role, cell wall formation. The chain is UDP-N-acetylmuramate--L-alanine ligase from Escherichia coli (strain SE11).